A 22-amino-acid polypeptide reads, in one-letter code: Myofibril-bound serine protease (22 aa).

Positions 1-22 (IVGGYECEAYSKPYQVSINLGY) constitute a Peptidase S1 domain.

It belongs to the peptidase S1 family. Detected in skeletal muscle (at protein level).

The protein localises to the cytoplasm. Serine protease which degrades the myosin heavy chain and tropomyosin, but not actin. Selectively cleaves Arg-|-Xaa bonds. The sequence is that of Myofibril-bound serine protease from Saurida undosquamis (Brushtooth lizardfish).